A 63-amino-acid polypeptide reads, in one-letter code: Large ribosomal subunit protein bL28 (63 aa).

Residues 1–22 (MSRRCAITGKSAMNGHSVSHAN) form a disordered region.

This sequence belongs to the bacterial ribosomal protein bL28 family.

The protein is Large ribosomal subunit protein bL28 of Campylobacter hominis (strain ATCC BAA-381 / DSM 21671 / CCUG 45161 / LMG 19568 / NCTC 13146 / CH001A).